A 396-amino-acid chain; its full sequence is Elongation factor Tu 2 (396 aa).

The region spanning 10-206 (KPHVNVGTIG…ALDTYIPTPE (197 aa)) is the tr-type G domain. The G1 stretch occupies residues 19-26 (GHVDHGKT). 19–26 (GHVDHGKT) is a GTP binding site. Threonine 26 provides a ligand contact to Mg(2+). Residues 60 to 64 (GITIN) form a G2 region. Positions 81–84 (DCPG) are G3. Residues 81–85 (DCPGH) and 136–139 (NKAD) each bind GTP. Positions 136–139 (NKAD) are G4. Residues 174–176 (SAK) are G5.

It belongs to the TRAFAC class translation factor GTPase superfamily. Classic translation factor GTPase family. EF-Tu/EF-1A subfamily. As to quaternary structure, monomer.

The protein resides in the cytoplasm. It catalyses the reaction GTP + H2O = GDP + phosphate + H(+). Functionally, GTP hydrolase that promotes the GTP-dependent binding of aminoacyl-tRNA to the A-site of ribosomes during protein biosynthesis. The polypeptide is Elongation factor Tu 2 (Methylobacillus flagellatus (strain ATCC 51484 / DSM 6875 / VKM B-1610 / KT)).